The following is a 295-amino-acid chain: Regucalcin (295 aa).

Glutamate 18 serves as a coordination point for a divalent metal cation. Residues arginine 100, asparagine 102, and aspartate 120 each coordinate substrate. 2 residues coordinate a divalent metal cation: asparagine 150 and aspartate 200. The active-site Proton donor/acceptor is the aspartate 200.

This sequence belongs to the SMP-30/CGR1 family. The cofactor is Zn(2+). Requires Mn(2+) as cofactor. Ca(2+) serves as cofactor. Mg(2+) is required as a cofactor.

It localises to the cytoplasm. It catalyses the reaction D-glucono-1,5-lactone + H2O = D-gluconate + H(+). The protein operates within cofactor biosynthesis; L-ascorbate biosynthesis via UDP-alpha-D-glucuronate pathway; L-ascorbate from UDP-alpha-D-glucuronate: step 3/4. Functionally, gluconolactonase with low activity towards other sugar lactones, including gulonolactone and galactonolactone. Catalyzes a key step in ascorbic acid (vitamin C) biosynthesis. Can also hydrolyze diisopropyl phosphorofluoridate and phenylacetate (in vitro). Calcium-binding protein. Modulates Ca(2+) signaling, and Ca(2+)-dependent cellular processes and enzyme activities. The sequence is that of Regucalcin from Danio rerio (Zebrafish).